Here is a 51-residue protein sequence, read N- to C-terminus: Cytochrome bd ubiquinol oxidase subunit X (51 aa).

The Cytoplasmic segment spans residues 1-3 (MWY). The helical transmembrane segment at 4-26 (FSWLLGLPLAAAFAVLNAMWYEL) threads the bilayer. The Periplasmic portion of the chain corresponds to 27–51 (MDDRARKRLAADPTAELALEGNKHH).

The protein belongs to the cytochrome ubiquinol oxidase subunit X family. As to quaternary structure, may be a subunit of cytochrome ubiquinol oxidase.

It localises to the cell inner membrane. The catalysed reaction is 2 a ubiquinol + O2(in) + 4 H(+)(in) = 2 a ubiquinone + 2 H2O(in) + 4 H(+)(out). It functions in the pathway energy metabolism; oxidative phosphorylation. Its function is as follows. Required for correct functioning of cytochrome bd oxidase. The protein is Cytochrome bd ubiquinol oxidase subunit X (cydX) of Brucella abortus (strain 2308).